Here is a 1216-residue protein sequence, read N- to C-terminus: Histone-lysine N-methyltransferase SETDB1-B (1216 aa).

Residues 38-61 are a coiled coil; sequence KADLEQLQEWVEQREKEVADIDAL. Tudor domains are found at residues 266 to 329 and 356 to 412; these read RLFV…LKKT and LLKP…NLKM. The tract at residues 417 to 513 is disordered; it reads SQEKKMAGQQ…QGMPSDLQPK (97 aa). Over residues 467–478 the composition is skewed to pro residues; it reads PVAPQPAGPPQP. Residues 482–498 show a composition bias toward polar residues; it reads ESPSFKSQMAKKSTGQL. The 72-residue stretch at 595–666 folds into the MBD domain; it reads HRGRNPLLTP…EMFCLDPYVL (72 aa). Positions 728–801 constitute a Pre-SET domain; it reads VGCDCTDGCR…MCTNRLVQHG (74 aa). Residues Cys730, Cys732, Cys736, Cys742, Cys744, Cys782, Cys786, Cys788, and Cys793 each contribute to the Zn(2+) site. The SET domain occupies 804-1179; that stretch reads VRLQLFKTQN…AGTELTWDYN (376 aa). S-adenosyl-L-methionine contacts are provided by residues 814 to 816, Asp852, and Tyr854; that span reads KGW. 3 disordered regions span residues 892–944, 961–1057, and 1081–1108; these read LPAS…DTFV, RRQA…KTQA, and KSGG…NGPK. A compositionally biased stretch (acidic residues) spans 918-940; that stretch reads DSSEESDDEKDDDSNEDDSDSSD. 2 stretches are compositionally biased toward basic and acidic residues: residues 966–976 and 983–997; these read GLKEESQDSKD and GEDR…ETGK. Over residues 1003 to 1016 the composition is skewed to polar residues; sequence WLTNQSSTSANQSV. 2 stretches are compositionally biased toward basic and acidic residues: residues 1020–1029 and 1046–1055; these read GGIKTEKKDV and DDNKEREKKT. Gly residues predominate over residues 1082–1105; the sequence is SGGGGAGGGGSGPSHGHGGGGGDN. Residues Arg1133 and 1136-1137 each bind S-adenosyl-L-methionine; that span reads NH. Zn(2+) contacts are provided by Cys1139, Cys1192, Cys1194, and Cys1199. The Post-SET domain maps to 1188 to 1204; it reads KELLCCCGSTECRGRLL.

The protein belongs to the class V-like SAM-binding methyltransferase superfamily. Histone-lysine methyltransferase family. Suvar3-9 subfamily.

The protein resides in the nucleus. Its subcellular location is the chromosome. The enzyme catalyses L-lysyl(4)-[histone H3] + 3 S-adenosyl-L-methionine = N(6),N(6),N(6)-trimethyl-L-lysyl(4)-[histone H3] + 3 S-adenosyl-L-homocysteine + 3 H(+). Its function is as follows. Histone methyltransferase that specifically trimethylates 'Lys-9' of histone H3. H3 'Lys-9' trimethylation represents a specific tag for epigenetic transcriptional repression by recruiting HP1 (CBX1, CBX3 and/or CBX5) proteins to methylated histones. Mainly functions in euchromatin regions, thereby playing a central role in the silencing of euchromatic genes. H3 'Lys-9' trimethylation is coordinated with DNA methylation. Plays a role in promoter hypermethylation and transcriptional silencing of tumor suppressor genes (TSGs) or other tumor-related genes. Also required to maintain a transcriptionally repressive state of genes in undifferentiated embryonic stem cells (ESCs). Associates at promoter regions of tumor suppressor genes (TSGs) leading to their gene silencing. In Danio rerio (Zebrafish), this protein is Histone-lysine N-methyltransferase SETDB1-B (setdb1b).